A 148-amino-acid polypeptide reads, in one-letter code: WAP four-disulfide core domain protein 6B (148 aa).

The N-terminal stretch at 1-35 is a signal peptide; sequence MPPNRLLLPKMRLWGLLPFLVPFILLWSIQEPALA. The 48-residue stretch at 37–84 folds into the WAP domain; it reads GVFIRTCPKYNKIKCDFEERNQCLRHRECPGEERCCLFACGRKCLDLS. 7 disulfides stabilise this stretch: Cys-43–Cys-72, Cys-51–Cys-76, Cys-59–Cys-71, Cys-65–Cys-80, Cys-88–Cys-138, Cys-97–Cys-121, and Cys-113–Cys-134. Positions 88–138 constitute a BPTI/Kunitz inhibitor domain; that stretch reads CSLPQDAGPCLAYLPRWWYNQDTKLCIEFIYGGCQGNPNNFESKAVCTSIC.

The protein resides in the secreted. This is WAP four-disulfide core domain protein 6B (Wfdc6b) from Mus musculus (Mouse).